The primary structure comprises 694 residues: DNA-directed RNA polymerase subunit beta' (694 aa).

Zn(2+) contacts are provided by cysteine 69, cysteine 71, cysteine 87, and cysteine 90. Mg(2+)-binding residues include aspartate 489, aspartate 491, and aspartate 493.

The protein belongs to the RNA polymerase beta' chain family. RpoC1 subfamily. As to quaternary structure, in plastids the minimal PEP RNA polymerase catalytic core is composed of four subunits: alpha, beta, beta', and beta''. When a (nuclear-encoded) sigma factor is associated with the core the holoenzyme is formed, which can initiate transcription. Mg(2+) serves as cofactor. Zn(2+) is required as a cofactor.

It localises to the plastid. Its subcellular location is the chloroplast. It catalyses the reaction RNA(n) + a ribonucleoside 5'-triphosphate = RNA(n+1) + diphosphate. Its function is as follows. DNA-dependent RNA polymerase catalyzes the transcription of DNA into RNA using the four ribonucleoside triphosphates as substrates. This is DNA-directed RNA polymerase subunit beta' from Gossypium barbadense (Sea Island cotton).